The following is a 384-amino-acid chain: L-aspartate decarboxylase (384 aa).

Position 231 is an N6-(pyridoxal phosphate)lysine (Lys231).

The protein belongs to the group II decarboxylase family. MfnA subfamily. In terms of assembly, homodimer. Can also form homohexamers. The cofactor is pyridoxal 5'-phosphate.

The catalysed reaction is L-aspartate + H(+) = beta-alanine + CO2. The protein operates within cofactor biosynthesis; coenzyme A biosynthesis. Inhibited by hydroxylamine. In terms of biological role, catalyzes the decarboxylation of L-aspartate to produce beta-alanine. In vitro, can also catalyze the decarboxylation of L-glutamate to produce 4-aminobutanoate, but this activity does not seem necessary in vivo. Shows much higher activity with L-aspartate than with L-glutamate. Does not decarboxylate L-tyrosine. In Thermococcus kodakarensis (strain ATCC BAA-918 / JCM 12380 / KOD1) (Pyrococcus kodakaraensis (strain KOD1)), this protein is L-aspartate decarboxylase.